Reading from the N-terminus, the 226-residue chain is Enolase-phosphatase E1 (226 aa).

Belongs to the HAD-like hydrolase superfamily. MasA/MtnC family. As to quaternary structure, monomer. Mg(2+) serves as cofactor.

The catalysed reaction is 5-methylsulfanyl-2,3-dioxopentyl phosphate + H2O = 1,2-dihydroxy-5-(methylsulfanyl)pent-1-en-3-one + phosphate. The protein operates within amino-acid biosynthesis; L-methionine biosynthesis via salvage pathway; L-methionine from S-methyl-5-thio-alpha-D-ribose 1-phosphate: step 3/6. It participates in amino-acid biosynthesis; L-methionine biosynthesis via salvage pathway; L-methionine from S-methyl-5-thio-alpha-D-ribose 1-phosphate: step 4/6. Bifunctional enzyme that catalyzes the enolization of 2,3-diketo-5-methylthiopentyl-1-phosphate (DK-MTP-1-P) into the intermediate 2-hydroxy-3-keto-5-methylthiopentenyl-1-phosphate (HK-MTPenyl-1-P), which is then dephosphorylated to form the acireductone 1,2-dihydroxy-3-keto-5-methylthiopentene (DHK-MTPene). The polypeptide is Enolase-phosphatase E1 (Shewanella baltica (strain OS223)).